The chain runs to 2988 residues: NBPF family member NBPF14 (2988 aa).

Residues 75-119 (RQFKEEKLAEQLKQAEELRQYKVLVHSQERELTQLREKLREGRDA) are a coiled coil. Disordered stretches follow at residues 161–200 (KLSP…SKVP), 451–474 (EKVQ…PEDS), and 520–566 (WEDA…EGYS). Residues 165 to 177 (ENDEDEDEDVQVE) show a composition bias toward acidic residues. Olduvai domains lie at 165-259 (ENDE…NILP), 436-528 (ENDN…HIIP), 529-600 (ENES…VDIG), 601-692 (RHRW…PSCP), 695-750 (SREL…LDVD), 751-843 (RIKK…RSKK), 844-919 (ERRR…LDVD), 920-1012 (RIKK…RSKK), 1013-1105 (ERRR…PSCP), 1108-1163 (SREL…LDVD), 1164-1256 (RIKK…RSKK), 1257-1349 (ERRR…PSCP), 1352-1407 (SREL…LDVD), 1408-1500 (RIKK…RSKK), 1501-1593 (ERRR…PSCP), 1596-1651 (SREL…LDVD), 1652-1744 (RFKK…RSKK), 1745-1837 (ERRR…PSCP), 1840-1895 (SREL…LDVD), 1896-1988 (RIKK…RSKK), 1989-2081 (ERRR…PSCP), 2084-2139 (SREL…LDVD), 2140-2232 (RIKK…RSKK), 2233-2325 (ERRR…PSCP), 2328-2383 (SREL…LDVD), 2384-2476 (RIKK…RSKK), 2477-2569 (ERRR…PSCP), 2572-2627 (SREL…LDVD), 2628-2720 (RIKK…RSKK), 2721-2813 (ERRR…PSCP), 2816-2889 (SREL…RSKK), and 2890-2988 (ERRR…IFPQ). Over residues 190 to 200 (EVQKAEESKVP) the composition is skewed to basic and acidic residues. Composition is skewed to acidic residues over residues 530–539 (NESDDEEEEE) and 550–562 (ESEE…ESWD). Disordered regions lie at residues 754 to 773 (KDEE…SREL), 828 to 871 (EKKG…LDEK), and 999 to 1038 (KGKG…ELLD). 2 stretches are compositionally biased toward basic residues: residues 831 to 849 (GKGK…RRGR) and 1000 to 1018 (GKGK…RRGR). A disordered region spans residues 1243–1282 (KGKGKKRRGRRSKKERRRGRKEGEEDQNPPCPRLSRELLD). The segment covering 1244-1262 (GKGKKRRGRRSKKERRRGR) has biased composition (basic residues). Residues 1487-1521 (KGKGKKRRGRRSKKERRRGRKEGEEDQNPPCPRLS) are disordered. The span at 1488–1506 (GKGKKRRGRRSKKERRRGR) shows a compositional bias: basic residues. Residues 1731–1770 (KGKGKKRRGRRSKKERRRGRKEGEEDQNPPCPRLSRELLD) are disordered. Over residues 1732–1750 (GKGKKRRGRRSKKERRRGR) the composition is skewed to basic residues. A disordered region spans residues 1975–2014 (KGKGKKRRGRRSKKERRRGRKEGEEDQNPPCPRLSRELLD). Residues 1976–1994 (GKGKKRRGRRSKKERRRGR) are compositionally biased toward basic residues. The disordered stretch occupies residues 2219-2258 (KGKGKKRRGRRSKKERRRGRKEGEEDQNPPCPRLSRELLD). Positions 2220 to 2238 (GKGKKRRGRRSKKERRRGR) are enriched in basic residues. The interval 2463 to 2502 (KGKGKKRRGRRSKKERRRGRKEGEEDQNPPCPRLSRELLD) is disordered. Positions 2464–2482 (GKGKKRRGRRSKKERRRGR) are enriched in basic residues. Disordered stretches follow at residues 2707-2745 (KGKG…RELL) and 2877-2909 (GKGK…CPRL). 2 stretches are compositionally biased toward basic residues: residues 2708–2726 (GKGK…RRGR) and 2877–2895 (GKGK…RRGR).

This sequence belongs to the NBPF family. As to expression, expressed in spleen and fetal liver.

Its subcellular location is the cytoplasm. In Homo sapiens (Human), this protein is NBPF family member NBPF14.